The following is an 88-amino-acid chain: U2-ctenitoxin-Pn1a (88 aa).

Positions 1 to 17 (MKVAILILSILVLAVAS) are cleaved as a signal peptide. The propeptide occupies 18–34 (ETIEEYRDDFAVEELER). Intrachain disulfides connect cysteine 37/cysteine 51, cysteine 44/cysteine 57, cysteine 48/cysteine 86, cysteine 50/cysteine 71, and cysteine 59/cysteine 69. A propeptide is located at residue lysine 88.

In terms of tissue distribution, expressed by the venom gland.

It localises to the secreted. Functionally, inhibits voltage-gated sodium channels (Nav). Causes scratching, lacrimation, hypersalivation, sweating and agitation followed by spastic paralysis of the anterior and posterior extremities and death at dose levels of 1.62 mg/mouse. Insecticidal to the larval and adult forms of the house fly. The polypeptide is U2-ctenitoxin-Pn1a (Phoneutria nigriventer (Brazilian armed spider)).